Reading from the N-terminus, the 638-residue chain is Probable ATP-binding protein YheS (638 aa).

ABC transporter domains are found at residues 2 to 246 and 313 to 531; these read IIFS…AQQT and VMIE…STSE. ATP-binding positions include 34–41 and 349–356; these read GKNGCGKS and GKNGAGKS. Residues 525–563 form a disordered region; it reads EQNSTSENKVSEKVGDNENSVQNRKEQKRREAELRQQTA. Over residues 547–558 the composition is skewed to basic and acidic residues; the sequence is NRKEQKRREAEL.

The protein belongs to the ABC transporter superfamily. ABCF family. YheS subfamily.

In terms of biological role, genetic data indicate it may be involved in ribosome assembly or function. The sequence is that of Probable ATP-binding protein YheS from Haemophilus influenzae (strain ATCC 51907 / DSM 11121 / KW20 / Rd).